The primary structure comprises 179 residues: uncharacterized protein (179 aa).

A coiled-coil region spans residues 139-172; sequence IEDLGKYIKSDRIEKEALREELEKILNTLVKHLE.

This is an uncharacterized protein from Methanocaldococcus jannaschii (strain ATCC 43067 / DSM 2661 / JAL-1 / JCM 10045 / NBRC 100440) (Methanococcus jannaschii).